Here is a 227-residue protein sequence, read N- to C-terminus: Ribose-5-phosphate isomerase A (227 aa).

Substrate-binding positions include 26 to 29 (TGST), 82 to 85 (DGAD), and 95 to 98 (KGGG). Glu104 functions as the Proton acceptor in the catalytic mechanism. Position 122 (Lys122) interacts with substrate.

It belongs to the ribose 5-phosphate isomerase family. Homodimer.

It carries out the reaction aldehydo-D-ribose 5-phosphate = D-ribulose 5-phosphate. It functions in the pathway carbohydrate degradation; pentose phosphate pathway; D-ribose 5-phosphate from D-ribulose 5-phosphate (non-oxidative stage): step 1/1. In terms of biological role, catalyzes the reversible conversion of ribose-5-phosphate to ribulose 5-phosphate. The sequence is that of Ribose-5-phosphate isomerase A from Streptococcus equi subsp. equi (strain 4047).